We begin with the raw amino-acid sequence, 692 residues long: Highly divergent homeobox (692 aa).

The homeobox 1 DNA-binding region spans 3–63 (LRSVFTVEQQ…NKRRKMSSKS (61 aa)). Residues 117–133 (SSSSKQGTTKHTNTQIT) show a composition bias toward polar residues. Residues 117-136 (SSSSKQGTTKHTNTQITEAH) are disordered. Residues Lys137, Lys142, Lys146, Lys165, Lys174, Lys196, Lys214, Lys223, and Lys234 each participate in a glycyl lysine isopeptide (Lys-Gly) (interchain with G-Cter in SUMO2) cross-link. Residues 437-500 (ALQDRTQFSD…NRRRKYRLMG (64 aa)) constitute a DNA-binding region (homeobox 2). Disordered stretches follow at residues 505–541 (PPRGGPADFSEQPESGSLSALTPGEEAGPEVGEDNDR) and 647–692 (KDQQ…SDSL). The segment covering 676–692 (TSLSVSSLSEKNASDSL) has biased composition (polar residues).

It is found in the nucleus. This chain is Highly divergent homeobox (Hdx), found in Mus musculus (Mouse).